The sequence spans 557 residues: Potassium-transporting ATPase potassium-binding subunit (557 aa).

Transmembrane regions (helical) follow at residues 5–25 (GFLL…PLGS), 63–83 (LSAI…MLLG), 132–152 (GLTV…FALI), 170–190 (LLRI…LFFI), 253–273 (FVQM…FGEV), 283–303 (LLWA…WAEV), 329–349 (VLVS…AVIA), 356–376 (ALGG…FGGV), 379–399 (GLYG…LMIG), 416–436 (LTAL…ALAM), 484–504 (LLAL…MAIA), and 526–546 (LFVG…FIPA).

This sequence belongs to the KdpA family. The system is composed of three essential subunits: KdpA, KdpB and KdpC.

The protein resides in the cell inner membrane. Its function is as follows. Part of the high-affinity ATP-driven potassium transport (or Kdp) system, which catalyzes the hydrolysis of ATP coupled with the electrogenic transport of potassium into the cytoplasm. This subunit binds the periplasmic potassium ions and delivers the ions to the membrane domain of KdpB through an intramembrane tunnel. In Escherichia coli O127:H6 (strain E2348/69 / EPEC), this protein is Potassium-transporting ATPase potassium-binding subunit.